Reading from the N-terminus, the 338-residue chain is Elongation factor Ts, mitochondrial (338 aa).

Residues 1 to 42 constitute a mitochondrion transit peptide; the sequence is MSPSIAMFTLTPNARALASKTSKMDLIKNLRERTGAPIVDVK.

It belongs to the EF-Ts family.

The protein resides in the mitochondrion. In terms of biological role, associates with the EF-Tu.GDP complex and induces the exchange of GDP to GTP. It remains bound to the aminoacyl-tRNA.EF-Tu.GTP complex up to the GTP hydrolysis stage on the ribosome. The polypeptide is Elongation factor Ts, mitochondrial (Ostreococcus tauri).